Here is a 415-residue protein sequence, read N- to C-terminus: Serine hydroxymethyltransferase (415 aa).

(6S)-5,6,7,8-tetrahydrofolate contacts are provided by residues Leu-117 and 121-123 (GHL). Lys-225 carries the post-translational modification N6-(pyridoxal phosphate)lysine. (6S)-5,6,7,8-tetrahydrofolate is bound by residues Glu-241 and 349-351 (SPF).

This sequence belongs to the SHMT family. As to quaternary structure, homodimer. The cofactor is pyridoxal 5'-phosphate.

It is found in the cytoplasm. It carries out the reaction (6R)-5,10-methylene-5,6,7,8-tetrahydrofolate + glycine + H2O = (6S)-5,6,7,8-tetrahydrofolate + L-serine. The protein operates within one-carbon metabolism; tetrahydrofolate interconversion. Its pathway is amino-acid biosynthesis; glycine biosynthesis; glycine from L-serine: step 1/1. In terms of biological role, catalyzes the reversible interconversion of serine and glycine with tetrahydrofolate (THF) serving as the one-carbon carrier. This reaction serves as the major source of one-carbon groups required for the biosynthesis of purines, thymidylate, methionine, and other important biomolecules. Also exhibits THF-independent aldolase activity toward beta-hydroxyamino acids, producing glycine and aldehydes, via a retro-aldol mechanism. This chain is Serine hydroxymethyltransferase, found in Campylobacter hominis (strain ATCC BAA-381 / DSM 21671 / CCUG 45161 / LMG 19568 / NCTC 13146 / CH001A).